The chain runs to 291 residues: Protein ILRUN (291 aa).

The tract at residues Asn199–Ser291 is disordered. Residues Pro212–Thr228 are compositionally biased toward polar residues. Residues Ser215, Ser222, and Ser265 each carry the phosphoserine modification. Residues Leu257–Val276 are compositionally biased toward low complexity.

As to quaternary structure, interacts with IRF3; the interaction inhibits IRF3 binding to its DNA consensus sequence.

The protein resides in the cytoplasm. It localises to the nucleus. Negative regulator of innate antiviral response. Blocks IRF3-dependent cytokine production such as IFNA, IFNB and TNF. Interacts with IRF3 and inhibits IRF3 recruitment to type I IFN promoter sequences while also reducing nuclear levels of the coactivators EP300 and CREBBP. This Mus musculus (Mouse) protein is Protein ILRUN.